The following is a 99-amino-acid chain: Integration host factor subunit alpha (99 aa).

The tract at residues 49 to 73 is disordered; sequence FGNFDLRDKNQRPGRNPKTGEDIPI.

Belongs to the bacterial histone-like protein family. As to quaternary structure, heterodimer of an alpha and a beta chain.

In terms of biological role, this protein is one of the two subunits of integration host factor, a specific DNA-binding protein that functions in genetic recombination as well as in transcriptional and translational control. This Shigella boydii serotype 18 (strain CDC 3083-94 / BS512) protein is Integration host factor subunit alpha.